Here is a 183-residue protein sequence, read N- to C-terminus: Translocon-associated protein subunit beta (183 aa).

Positions 1-17 (MRLLASVLLALFAVSHA) are cleaved as a signal peptide. Topologically, residues 18–149 (EEGARLLASK…DRRFSPHFLD (132 aa)) are lumenal. N-linked (GlcNAc...) asparagine glycans are attached at residues Asn88 and Asn104. A helical transmembrane segment spans residues 150–169 (WAAFGVMTLPSIGIPLLLWY). The Cytoplasmic portion of the chain corresponds to 170–183 (SSKRKYDTPKSKKN).

The protein belongs to the TRAP-beta family. Heterotetramer of TRAP-alpha, TRAP-beta, TRAP-delta and TRAP-gamma. Interacts with STING1.

The protein resides in the endoplasmic reticulum membrane. Functionally, TRAP proteins are part of a complex whose function is to bind calcium to the ER membrane and thereby regulate the retention of ER resident proteins. This chain is Translocon-associated protein subunit beta (SSR2), found in Canis lupus familiaris (Dog).